A 342-amino-acid polypeptide reads, in one-letter code: GTP 3',8-cyclase (342 aa).

In terms of domain architecture, Radical SAM core spans 18–247 (GFSRRFYYLR…QLRGADDGPA (230 aa)). A GTP-binding site is contributed by Arg-27. Cys-34 and Cys-38 together coordinate [4Fe-4S] cluster. Residue Tyr-40 coordinates S-adenosyl-L-methionine. Cys-41 is a [4Fe-4S] cluster binding site. Residue Arg-81 participates in GTP binding. Gly-85 contributes to the S-adenosyl-L-methionine binding site. GTP is bound at residue Thr-112. S-adenosyl-L-methionine is bound at residue Ser-136. Lys-173 contacts GTP. Residue Met-207 coordinates S-adenosyl-L-methionine. [4Fe-4S] cluster contacts are provided by Cys-270 and Cys-273. A GTP-binding site is contributed by 275–277 (RLR). Residue Cys-287 coordinates [4Fe-4S] cluster.

The protein belongs to the radical SAM superfamily. MoaA family. Monomer and homodimer. [4Fe-4S] cluster is required as a cofactor.

It carries out the reaction GTP + AH2 + S-adenosyl-L-methionine = (8S)-3',8-cyclo-7,8-dihydroguanosine 5'-triphosphate + 5'-deoxyadenosine + L-methionine + A + H(+). The protein operates within cofactor biosynthesis; molybdopterin biosynthesis. Its function is as follows. Catalyzes the cyclization of GTP to (8S)-3',8-cyclo-7,8-dihydroguanosine 5'-triphosphate. This Aeromonas hydrophila subsp. hydrophila (strain ATCC 7966 / DSM 30187 / BCRC 13018 / CCUG 14551 / JCM 1027 / KCTC 2358 / NCIMB 9240 / NCTC 8049) protein is GTP 3',8-cyclase.